The following is a 640-amino-acid chain: MPIIALPDGNKKKFDQPVTIMEVAESLGPGLAKAAIAGRVNGVLLDTCIPIEKDSEVNIITAKDQDGIETIRHSFAHLIGHAVKQLYPEAKMAIGPVIEDGFYYDIAYDHPFTPKDLEAIEARMKELVKLDYDVNVEIVSKEEARKEFEKRCEPYKIEIVDEIPENEIIKLYRHQEYTDMCRGPHVPNTRHLRTFKLMKVSGAYWRGDSNKTMLQRIYGTAWGSSKELKAYLKRLEEAEKRDHRRIAKQMSLFHTQEEAPGMIFWHAKGWAIYQVLEQYIRETLSLHDYQEIRTPQVVDRSLWEKSGHWEKFKDDMFTTTSENREYAIKPMNCPCHVQIFNQGLKSYRDLPIRLAEFGSCLRNEPSGSLHGLMRVRNFVQDDAHIFCTELQVQEEVSKFIDLVFEVYRSFGFDSVLIKLSTRPEKRVGSDEIWDKSEKALSDALDAKGLAWDLLPGEGAFYGPKIEFSLKDCLGRVWQCGTIQVDFSMPERLGASYVAEDSQRRTPVMLHRAILGSFERFIGILIEHYAGRLPIWLAPVQVVVMGITDRNAQACQDICKKLSALEYRTEVDLRNEKIGFKVREHTLQRVPFLIIIGDKEQQSGEVAVRTREGKDFGSMPLKGFTSLLDEAIALKGRSGVS.

Residues 1 to 61 (MPIIALPDGN…EKDSEVNIIT (61 aa)) form the TGS domain. Residues 242–533 (DHRRIAKQMS…LIEHYAGRLP (292 aa)) are catalytic. Residues Cys333, His384, and His510 each contribute to the Zn(2+) site.

Belongs to the class-II aminoacyl-tRNA synthetase family. As to quaternary structure, homodimer. The cofactor is Zn(2+).

Its subcellular location is the cytoplasm. It carries out the reaction tRNA(Thr) + L-threonine + ATP = L-threonyl-tRNA(Thr) + AMP + diphosphate + H(+). Its function is as follows. Catalyzes the attachment of threonine to tRNA(Thr) in a two-step reaction: L-threonine is first activated by ATP to form Thr-AMP and then transferred to the acceptor end of tRNA(Thr). Also edits incorrectly charged L-seryl-tRNA(Thr). The polypeptide is Threonine--tRNA ligase (Prochlorococcus marinus (strain MIT 9313)).